We begin with the raw amino-acid sequence, 284 residues long: 4-hydroxy-3-methylbut-2-enyl diphosphate reductase (284 aa).

Residue C12 participates in [4Fe-4S] cluster binding. (2E)-4-hydroxy-3-methylbut-2-enyl diphosphate-binding residues include H40 and H76. Dimethylallyl diphosphate is bound by residues H40 and H76. Isopentenyl diphosphate contacts are provided by H40 and H76. Residue C98 coordinates [4Fe-4S] cluster. H126 serves as a coordination point for (2E)-4-hydroxy-3-methylbut-2-enyl diphosphate. Position 126 (H126) interacts with dimethylallyl diphosphate. Residue H126 participates in isopentenyl diphosphate binding. E128 functions as the Proton donor in the catalytic mechanism. T161 lines the (2E)-4-hydroxy-3-methylbut-2-enyl diphosphate pocket. C191 provides a ligand contact to [4Fe-4S] cluster. Residues S219, S220, N221, and S263 each contribute to the (2E)-4-hydroxy-3-methylbut-2-enyl diphosphate site. 4 residues coordinate dimethylallyl diphosphate: S219, S220, N221, and S263. Positions 219, 220, 221, and 263 each coordinate isopentenyl diphosphate.

This sequence belongs to the IspH family. It depends on [4Fe-4S] cluster as a cofactor.

The enzyme catalyses isopentenyl diphosphate + 2 oxidized [2Fe-2S]-[ferredoxin] + H2O = (2E)-4-hydroxy-3-methylbut-2-enyl diphosphate + 2 reduced [2Fe-2S]-[ferredoxin] + 2 H(+). The catalysed reaction is dimethylallyl diphosphate + 2 oxidized [2Fe-2S]-[ferredoxin] + H2O = (2E)-4-hydroxy-3-methylbut-2-enyl diphosphate + 2 reduced [2Fe-2S]-[ferredoxin] + 2 H(+). The protein operates within isoprenoid biosynthesis; dimethylallyl diphosphate biosynthesis; dimethylallyl diphosphate from (2E)-4-hydroxy-3-methylbutenyl diphosphate: step 1/1. Its pathway is isoprenoid biosynthesis; isopentenyl diphosphate biosynthesis via DXP pathway; isopentenyl diphosphate from 1-deoxy-D-xylulose 5-phosphate: step 6/6. Its function is as follows. Catalyzes the conversion of 1-hydroxy-2-methyl-2-(E)-butenyl 4-diphosphate (HMBPP) into a mixture of isopentenyl diphosphate (IPP) and dimethylallyl diphosphate (DMAPP). Acts in the terminal step of the DOXP/MEP pathway for isoprenoid precursor biosynthesis. This chain is 4-hydroxy-3-methylbut-2-enyl diphosphate reductase, found in Petrotoga mobilis (strain DSM 10674 / SJ95).